Reading from the N-terminus, the 785-residue chain is Gamma-interferon-inducible protein 16 (785 aa).

Residues 5 to 92 (YKNIVLLKGL…KKEKLKAKGL (88 aa)) form the Pyrin domain. At K45 the chain carries N6-acetyllysine. The span at 88 to 99 (KAKGLAPSRKRK) shows a compositional bias: basic residues. Residues 88–196 (KAKGLAPSRK…TVAKCQATPR (109 aa)) are disordered. At S95 the chain carries Phosphoserine. Positions 96 to 100 (RKRKK) match the Nuclear localization signal motif. K99 carries the post-translational modification N6-acetyllysine. Low complexity predominate over residues 104–114 (AASPAPSTSST). S106 carries the post-translational modification Phosphoserine. K116 is covalently cross-linked (Glycyl lysine isopeptide (Lys-Gly) (interchain with G-Cter in SUMO2)). Position 128 is an N6-acetyllysine; alternate (K128). K128 is covalently cross-linked (Glycyl lysine isopeptide (Lys-Gly) (interchain with G-Cter in SUMO2); alternate). Short sequence motifs (nuclear localization signal) lie at residues 128–131 (KRKK), 134–136 (KEK), and 140–143 (KGSK). A compositionally biased stretch (low complexity) spans 166 to 182 (SPSPKTSSSAPPNTSST). Phosphoserine occurs at positions 168 and 174. The tract at residues 192–393 (QATPRRSVLQ…SFIQIKKKTN (202 aa)) is interaction with TP53 C-terminus. Positions 193-393 (ATPRRSVLQK…SFIQIKKKTN (201 aa)) constitute an HIN-200 1 domain. K214 is subject to N6-acetyllysine. The segment at 388–442 (IKKKTNPRNNDPKSMKLPQEQSQLPNPSEAGTTFPESHLWTPQMPPTTPSSSFFT) is disordered. Residues 406–422 (QEQSQLPNPSEAGTTFP) show a composition bias toward polar residues. An N6-acetyllysine mark is found at K444 and K451. Positions 566–765 (EVSIEDSAQS…SHIKVIKTRK (200 aa)) constitute an HIN-200 2 domain. Residues 571-766 (DSAQSDLKEV…HIKVIKTRKN (196 aa)) form an interaction with TP53 core domain region. At S575 the chain carries Phosphoserine. N6-acetyllysine occurs at positions 598 and 614. Residue K683 forms a Glycyl lysine isopeptide (Lys-Gly) (interchain with G-Cter in SUMO2) linkage. Residue S780 is modified to Phosphoserine.

The protein belongs to the HIN-200 family. In terms of assembly, forms homooligomers. Interacts with TMEM173, AIM2, PYCARD and CASP1. Interacts with BRCA1, TP53, E2F1, RB1 and SP1. Interacts with MTA1. Interacts with MTA1. Interacts with PYDC5. Post-translationally, lysine acetylation in the multipartite nuclear localization signal (NLS) regulates the subcellular location. In terms of processing, phosphorylated on Ser and Thr.

The protein resides in the nucleus. It localises to the cytoplasm. In terms of biological role, binds double-stranded DNA. Binds preferentially to supercoiled DNA and cruciform DNA structures. Seems to be involved in transcriptional regulation. May function as a transcriptional repressor. Could have a role in the regulation of hematopoietic differentiation through activation of unknown target genes. Controls cellular proliferation by modulating the functions of cell cycle regulatory factors including p53/TP53 and the retinoblastoma protein. May be involved in TP53-mediated transcriptional activation by enhancing TP53 sequence-specific DNA binding and modulating TP53 phosphorylation status. Seems to be involved in energy-level-dependent activation of the ATM/ AMPK/TP53 pathway coupled to regulation of autophagy. May be involved in regulation of TP53-mediated cell death also involving BRCA1. May be involved in the senescence of prostate epithelial cells. Involved in innate immune response by recognizing viral dsDNA in the cytosol and probably in the nucleus. After binding to viral DNA in the cytoplasm recruits TMEM173/STING and mediates the induction of IFN-beta. Has anti-inflammatory activity and inhibits the activation of the AIM2 inflammasome, probably via association with AIM2. Proposed to bind viral DNA in the nucleus and to induce the formation of nuclear caspase-1-activating inflammasome formation via association with PYCARD. Inhibits replication of herpesviruses probably by interfering with promoter recruitment of members of the Sp1 family of transcription factors. This Pongo abelii (Sumatran orangutan) protein is Gamma-interferon-inducible protein 16 (IFI16).